A 356-amino-acid polypeptide reads, in one-letter code: Alanine racemase, catabolic (356 aa).

Lysine 35 functions as the Proton acceptor; specific for D-alanine in the catalytic mechanism. Lysine 35 is modified (N6-(pyridoxal phosphate)lysine). Arginine 130 contacts substrate. The active-site Proton acceptor; specific for L-alanine is the tyrosine 253. Methionine 301 is a binding site for substrate.

This sequence belongs to the alanine racemase family. Pyridoxal 5'-phosphate is required as a cofactor.

The catalysed reaction is L-alanine = D-alanine. Its function is as follows. Isomerizes L-alanine to D-alanine which is then oxidized to pyruvate by DadA. This chain is Alanine racemase, catabolic (dadX), found in Escherichia coli O157:H7.